The chain runs to 490 residues: tRNA-2-methylthio-N(6)-dimethylallyladenosine synthase (490 aa).

One can recognise an MTTase N-terminal domain in the interval 37-154 (KKVYIATQGC…LPELYDKSTT (118 aa)). 6 residues coordinate [4Fe-4S] cluster: Cys-46, Cys-83, Cys-117, Cys-198, Cys-202, and Cys-205. The 233-residue stretch at 184–416 (KVEGYRAFVS…QKVIRDSTLK (233 aa)) folds into the Radical SAM core domain. Positions 419–487 (EEMVGKTLRV…PHMVRGELVD (69 aa)) constitute a TRAM domain.

This sequence belongs to the methylthiotransferase family. MiaB subfamily. Monomer. [4Fe-4S] cluster serves as cofactor.

The protein resides in the cytoplasm. The catalysed reaction is N(6)-dimethylallyladenosine(37) in tRNA + (sulfur carrier)-SH + AH2 + 2 S-adenosyl-L-methionine = 2-methylsulfanyl-N(6)-dimethylallyladenosine(37) in tRNA + (sulfur carrier)-H + 5'-deoxyadenosine + L-methionine + A + S-adenosyl-L-homocysteine + 2 H(+). Catalyzes the methylthiolation of N6-(dimethylallyl)adenosine (i(6)A), leading to the formation of 2-methylthio-N6-(dimethylallyl)adenosine (ms(2)i(6)A) at position 37 in tRNAs that read codons beginning with uridine. The sequence is that of tRNA-2-methylthio-N(6)-dimethylallyladenosine synthase from Psychrobacter sp. (strain PRwf-1).